The sequence spans 221 residues: Thiamine-phosphate synthase (221 aa).

Residues 49–53 and N85 each bind 4-amino-2-methyl-5-(diphosphooxymethyl)pyrimidine; that span reads QFREK. Positions 86 and 105 each coordinate Mg(2+). S124 serves as a coordination point for 4-amino-2-methyl-5-(diphosphooxymethyl)pyrimidine. 151–153 lines the 2-[(2R,5Z)-2-carboxy-4-methylthiazol-5(2H)-ylidene]ethyl phosphate pocket; the sequence is TQS. K154 is a 4-amino-2-methyl-5-(diphosphooxymethyl)pyrimidine binding site. 2-[(2R,5Z)-2-carboxy-4-methylthiazol-5(2H)-ylidene]ethyl phosphate-binding positions include G183 and 203–204; that span reads IS.

It belongs to the thiamine-phosphate synthase family. Mg(2+) serves as cofactor.

It catalyses the reaction 2-[(2R,5Z)-2-carboxy-4-methylthiazol-5(2H)-ylidene]ethyl phosphate + 4-amino-2-methyl-5-(diphosphooxymethyl)pyrimidine + 2 H(+) = thiamine phosphate + CO2 + diphosphate. The enzyme catalyses 2-(2-carboxy-4-methylthiazol-5-yl)ethyl phosphate + 4-amino-2-methyl-5-(diphosphooxymethyl)pyrimidine + 2 H(+) = thiamine phosphate + CO2 + diphosphate. The catalysed reaction is 4-methyl-5-(2-phosphooxyethyl)-thiazole + 4-amino-2-methyl-5-(diphosphooxymethyl)pyrimidine + H(+) = thiamine phosphate + diphosphate. It functions in the pathway cofactor biosynthesis; thiamine diphosphate biosynthesis; thiamine phosphate from 4-amino-2-methyl-5-diphosphomethylpyrimidine and 4-methyl-5-(2-phosphoethyl)-thiazole: step 1/1. Its function is as follows. Condenses 4-methyl-5-(beta-hydroxyethyl)thiazole monophosphate (THZ-P) and 2-methyl-4-amino-5-hydroxymethyl pyrimidine pyrophosphate (HMP-PP) to form thiamine monophosphate (TMP). The protein is Thiamine-phosphate synthase of Histophilus somni (strain 129Pt) (Haemophilus somnus).